A 179-amino-acid polypeptide reads, in one-letter code: Putative cleavage and polyadenylation specificity factor subunit 4-like protein (179 aa).

5 consecutive C3H1-type zinc fingers follow at residues 35–61, 62–89, 90–117, 118–145, and 146–169; these read KSASAVCNFFTKGLCEKGKLCPFRHDR, GEKMVVCKHWLRGLCKKGDHCKFLHQYD, LTRMPECYFYSKFGDCSNKECSFLHVKP, AFKSQDCPWYDQGFCKDGPLCKYRHVPR, and IMCLNYLVGFCPEGPKCQFAQKIR.

The protein belongs to the CPSF4/YTH1 family.

This Homo sapiens (Human) protein is Putative cleavage and polyadenylation specificity factor subunit 4-like protein (CPSF4L).